The chain runs to 90 residues: Sakacin-A immunity factor (90 aa).

Imparts immunity to sakacin-A to naturally sensitive host strains. The protein is Sakacin-A immunity factor (saiA) of Latilactobacillus sakei (Lactobacillus sakei).